Reading from the N-terminus, the 365-residue chain is Crh-like protein ARB_03382 (365 aa).

Positions 1–25 (MMASRRISVLSSLGLFACLLSPVVA) are cleaved as a signal peptide. Residues 26–302 (QTFTYCNPLE…RWRELPTAAK (277 aa)) lie on the Extracellular side of the membrane. Cys-31 and Cys-39 are joined by a disulfide. 4 N-linked (GlcNAc...) asparagine glycosylation sites follow: Asn-48, Asn-54, Asn-63, and Asn-77. Residues 50–243 (TTYLNSSLNP…YEKTPYIMSV (194 aa)) enclose the GH16 domain. Catalysis depends on Glu-125, which acts as the Nucleophile. The Proton donor role is filled by Glu-129. A chitin-binding site is contributed by Glu-129. Asn-147 and Asn-168 each carry an N-linked (GlcNAc...) asparagine glycan. Chitin is bound by residues Arg-209 and Trp-213. The helical transmembrane segment at 303 to 323 (IAIFASIGGLVILGMAIIAFC) threads the bilayer. The Cytoplasmic segment spans residues 324 to 365 (CVKQRRAGRREFSMENSKFVEDQNNVMAMRTQWNHKYKPVGS).

The protein belongs to the glycosyl hydrolase 16 family. CRH1 subfamily.

It is found in the membrane. The catalysed reaction is Random endo-hydrolysis of N-acetyl-beta-D-glucosaminide (1-&gt;4)-beta-linkages in chitin and chitodextrins.. In terms of biological role, dual chitinase/transglycosylase that plays a role in cell wall architecture. Chitinase and transglycosylase activities are coupled. Required for the polysaccharide cross-linking at the septa and the cell wall. More specifically, transfers chitin to 1,6-beta-glucan in the cell wall. Plays an important role in fungal pathogenesis. Involved in cell wall assembly and regeneration, filamentation, and adherence to host cells. The protein is Crh-like protein ARB_03382 of Arthroderma benhamiae (strain ATCC MYA-4681 / CBS 112371) (Trichophyton mentagrophytes).